A 609-amino-acid polypeptide reads, in one-letter code: Alpha-fetoprotein (609 aa).

Residues 1-18 (MKWVESIFLIFLLNFTES) form the signal peptide. Albumin domains follow at residues 19–210 (RTLH…ATVT), 211–402 (KELR…EELQ), and 403–601 (KYIQ…KLIS). H22 contributes to the Cu(2+) binding site. 8 disulfide bridges follow: C99/C114, C113/C124, C148/C193, C192/C201, C224/C270, C269/C277, C289/C303, and C302/C313. Phosphoserine is present on residues S111, S115, and S117. A glycan (N-linked (GlcNAc...) asparagine) is linked at N251. A Phosphoserine modification is found at S344. 7 disulfides stabilise this stretch: C384–C393, C416–C462, C461–C472, C485–C501, C500–C511, C538–C583, and C582–C591. Phosphoserine is present on S444.

The protein belongs to the ALB/AFP/VDB family. In terms of assembly, dimeric and trimeric forms have been found in addition to the monomeric form. Post-translationally, sulfated. Plasma.

Its subcellular location is the secreted. Its function is as follows. Binds copper, nickel, and fatty acids as well as, and bilirubin less well than, serum albumin. The chain is Alpha-fetoprotein (AFP) from Gorilla gorilla gorilla (Western lowland gorilla).